The chain runs to 476 residues: FAD-dependent monooxygenase ausM (476 aa).

FAD is bound by residues glutamate 41, glycine 55, and arginine 114. Tyrosine 222 is a catalytic residue. Residues aspartate 314 and alanine 327 each coordinate FAD. A helical transmembrane segment spans residues 447–467 (LGSTPIHMLTLLLPCLFYFMY).

This sequence belongs to the paxM FAD-dependent monooxygenase family. The cofactor is FAD.

Its subcellular location is the membrane. Its pathway is secondary metabolite biosynthesis; terpenoid biosynthesis. In terms of biological role, FAD-dependent monooxygenase; part of the gene cluster A that mediates the biosynthesis of the fungal meroterpenoid acetoxydehydroaustin. The first step of the pathway is the synthesis of 3,5-dimethylorsellinic acid by the polyketide synthase ausA. 3,5-dimethylorsellinic acid is then prenylated by the polyprenyl transferase ausN. Further epoxidation by the FAD-dependent monooxygenase ausM and cyclization by the probable terpene cyclase ausL lead to the formation of protoaustinoid A. Protoaustinoid A is then oxidized to spiro-lactone preaustinoid A3 by the combined action of the FAD-binding monooxygenases ausB and ausC, and the dioxygenase ausE. Acid-catalyzed keto-rearrangement and ring contraction of the tetraketide portion of preaustinoid A3 by ausJ lead to the formation of preaustinoid A4. The aldo-keto reductase ausK, with the help of ausH, is involved in the next step by transforming preaustinoid A4 into isoaustinone which is in turn hydroxylated by the P450 monooxygenase ausI to form austinolide. The cytochrome P450 monooxygenase ausG then modifies austinolide to austinol. Austinol is further acetylated to austin by the O-acetyltransferase ausP, which spontaneously changes to dehydroaustin. The cytochrome P450 monooxygenase then converts dehydroaustin is into 7-dehydrodehydroaustin. The hydroxylation catalyzed by ausR permits the second O-acetyltransferase ausQ to add an additional acetyl group to the molecule, leading to the formation of acetoxydehydroaustin. Due to genetic rearrangements of the clusters and the subsequent loss of some enzymes, the end product of the Penicillium brasilianum austinoid biosynthesis clusters is acetoxydehydroaustin. The chain is FAD-dependent monooxygenase ausM from Penicillium brasilianum.